We begin with the raw amino-acid sequence, 3284 residues long: Location of vulva defective 1 (3284 aa).

The signal sequence occupies residues 1–21 (MKKSNFFVLLLLAISAIQIDG). 5 disordered regions span residues 226-326 (ESTS…ITST), 350-505 (TTML…GTNP), 623-702 (VASS…ADST), 827-926 (STSE…ASTE), and 1043-1216 (TTTE…SLAT). Low complexity-rich tracts occupy residues 227–326 (STST…ITST) and 350–500 (TTML…TTSS). The segment covering 827–913 (STSEVTSTTS…PSDSSSASDS (87 aa)) has biased composition (low complexity). Residues 914 to 926 (MRTTTVDPDASTE) show a composition bias toward polar residues. Low complexity predominate over residues 1043-1057 (TTTETPPTTVSSSDD). A compositionally biased stretch (gly residues) spans 1060–1078 (GKTGGTGATGGTGGTGSGG). Positions 1079 to 1104 (SATTLSTGDAVRSTTSGSGSGQSSTG) are enriched in low complexity. A compositionally biased stretch (gly residues) spans 1105 to 1127 (SGAGGSGTTASGSGSGGSSGTGS). The span at 1128 to 1138 (DGVNSGKTTAL) shows a compositional bias: polar residues. Residues 1163–1192 (GSGSDSNGSSGVSTKSSSGSDTSGSSDSSG) are compositionally biased toward low complexity. Positions 1197-1216 (FSATAQPSTRTTKTRSSLAT) are enriched in polar residues. The GAIN-B domain occupies 2064–2227 (WNNSLQVEII…SVGAFNPTID (164 aa)). The cysteines at positions 2181 and 2209 are disulfide-linked. The tract at residues 2181–2227 (CYFYQKTSDVFNSEGMYPSDGQGMQFVNCSTDHLTMFSVGAFNPTID) is GPS. Residues 2245-2265 (VMIAAVFMLVVYGCLTINAII) form a helical membrane-spanning segment. The PLAT domain maps to 2288 to 2411 (YMYVIAVETG…GDGETERLAR (124 aa)). Helical transmembrane passes span 2453-2473 (DYSV…ITIL), 2496-2516 (IAFG…HILL), 2557-2577 (IIVF…MSLM), 2592-2612 (LILW…FLIL), 2672-2692 (LFIT…MVML), 2945-2965 (MLYI…YLYG), 2994-3014 (WNFM…AYTI), 3043-3063 (WEIV…CKMI), 3089-3109 (FGIA…AVLG), and 3144-3164 (FAFV…LQLY).

It belongs to the polycystin family. In terms of assembly, interacts (via PLAT domain) with atp-2 (via N-terminus) and with kin-10 (via C-terminus). Interacts (via C-terminus) with isoform a of stam-1/pqn-19 (via C-terminus). In terms of processing, autoproteolytically processed at the GPS region of the GAIN-B domain; this cleavage modulates receptor activity. In terms of tissue distribution, exclusively expressed in a subset of three categories of adult male sensory neurons: ray neurons, hook neurons and head cephalic (CEM) neurons.

It is found in the membrane. The protein resides in the cell projection. The protein localises to the cilium. In terms of biological role, required for two aspects of male mating behavior: response to hermaphrodite contact and vulva location. Acts in the same pathway as pkd-2 and atp-2 in response behavior. May be required for ciliary targeting of pkd-2. This chain is Location of vulva defective 1 (lov-1), found in Caenorhabditis elegans.